Consider the following 325-residue polypeptide: Aldo-keto reductase family 1 member D1 (325 aa).

Residues 22-26 (GLGTY) and aspartate 52 each bind NADP(+). Residue tyrosine 26 participates in substrate binding. Tyrosine 57, tryptophan 88, glutamate 119, and tyrosine 131 together coordinate substrate. Tyrosine 57 acts as the Proton donor in catalysis. NADP(+)-binding positions include 168–169 (SN), glutamine 192, and 218–223 (HSPLGT). Serine 228 is subject to Phosphoserine. Tryptophan 229 lines the substrate pocket. Residue 272–282 (KSFTPERIKEN) coordinates NADP(+).

It belongs to the aldo/keto reductase family.

It localises to the cytoplasm. It carries out the reaction 5beta-cholestan-3-one + NADP(+) = cholest-4-en-3-one + NADPH + H(+). It catalyses the reaction 4,5beta-dihydrocortisone + NADP(+) = cortisone + NADPH + H(+). The catalysed reaction is cortisol + NADPH + H(+) = 5beta-dihydrocortisol + NADP(+). The enzyme catalyses corticosterone + NADPH + H(+) = 5beta-dihydrocorticosterone + NADP(+). It carries out the reaction 7alpha,12alpha-dihydroxycholest-4-en-3-one + NADPH + H(+) = 7alpha,12alpha-dihydroxy-5beta-cholestan-3-one + NADP(+). It catalyses the reaction 7alpha-hydroxycholest-4-en-3-one + NADPH + H(+) = 7alpha-hydroxy-5beta-cholestan-3-one + NADP(+). The catalysed reaction is epitestosterone + NADPH + H(+) = 5beta-dihydroepitestosterone + NADP(+). The enzyme catalyses androst-4-ene-3,17-dione + NADPH + H(+) = 5beta-androstane-3,17-dione + NADP(+). It carries out the reaction progesterone + NADPH + H(+) = 5beta-pregnan-3,20-dione + NADP(+). It catalyses the reaction 21-hydroxyprogesterone + NADPH + H(+) = 5beta-dihydrodeoxycorticosterone + NADP(+). The catalysed reaction is aldosterone + NADPH + H(+) = 5beta-dihydroaldosterone + NADP(+). The enzyme catalyses 17beta-hydroxyandrosta-1,4-dien-3-one + NADPH + H(+) = 17beta-hydroxy-5beta-androst-1-en-3-one + NADP(+). It carries out the reaction 17beta-hydroxyestr-4-en-3-one + NADPH + H(+) = 17beta-hydroxy-5beta-estran-3-one + NADP(+). It catalyses the reaction 5beta-dihydrotestosterone + NADP(+) = testosterone + NADPH + H(+). The catalysed reaction is androst-4-ene-3,11,17-trione + NADPH + H(+) = 17beta-hydroxyandrost-4-ene-3,11-dione + NADP(+). Its activity is regulated as follows. Subject to inhibition by high substrate concentrations. Inhibited by testosterone concentrations above 10 uM. Inhibited by the primary and secondary bile acids chenodeoxycholic acid and ursodeoxycholic acid. Its function is as follows. Catalyzes the stereospecific NADPH-dependent reduction of the C4-C5 double bond of bile acid intermediates and steroid hormones carrying a delta(4)-3-one structure to yield an A/B cis-ring junction. This cis-configuration is crucial for bile acid biosynthesis and plays important roles in steroid metabolism. Capable of reducing a broad range of delta-(4)-3-ketosteroids from C18 (such as, 17beta-hydroxyestr-4-en-3-one) to C27 (such as, 7alpha-hydroxycholest-4-en-3-one). The polypeptide is Aldo-keto reductase family 1 member D1 (Akr1d1) (Mus musculus (Mouse)).